The sequence spans 394 residues: Mannosyl-3-phosphoglycerate synthase (394 aa).

The protein belongs to the glycosyltransferase 2 family. It depends on Mg(2+) as a cofactor.

It is found in the cytoplasm. The catalysed reaction is (2R)-3-phosphoglycerate + GDP-alpha-D-mannose = 2-O-(alpha-D-mannosyl)-3-phosphoglycerate + GDP + H(+). It participates in carbohydrate biosynthesis; 2-(alpha-D-mannosyl)-D-glycerate biosynthesis; 2-(alpha-D-mannosyl)-D-glycerate from GDP-alpha-D-mannose (MPG route): step 1/2. Functionally, transfers a mannosyl group from GDP-mannose to phosphoglycerate to form mannosyl-3-phosphoglycerate (MPG). The enzyme is absolutely specific for GDP-mannose and 3-phosphoglycerate, and transfers the mannosyl group with retention of configuration. In Pyrococcus horikoshii (strain ATCC 700860 / DSM 12428 / JCM 9974 / NBRC 100139 / OT-3), this protein is Mannosyl-3-phosphoglycerate synthase (mngA).